Reading from the N-terminus, the 239-residue chain is Protein Thf1 (239 aa).

Positions 183 to 219 form a coiled coil; sequence ERVKKDLELYRSNLDRLKQARAIVEEMVKAARRQQER. A compositionally biased stretch (basic and acidic residues) spans 211 to 221; sequence KAARRQQERRQ. Residues 211 to 239 are disordered; the sequence is KAARRQQERRQSTASLPETPAADRRESSG.

Belongs to the THF1 family.

May be involved in photosynthetic membrane biogenesis. This chain is Protein Thf1, found in Synechococcus sp. (strain JA-3-3Ab) (Cyanobacteria bacterium Yellowstone A-Prime).